We begin with the raw amino-acid sequence, 205 residues long: Endoribonuclease YbeY (205 aa).

Zn(2+) contacts are provided by His124, His128, and His134. Residues 162–205 (GTAPVAPGGEAQVPNEALETSGKRQDHSLGEILPGGMSRRLAGS) are disordered.

It belongs to the endoribonuclease YbeY family. Zn(2+) is required as a cofactor.

Its subcellular location is the cytoplasm. In terms of biological role, single strand-specific metallo-endoribonuclease involved in late-stage 70S ribosome quality control and in maturation of the 3' terminus of the 16S rRNA. The chain is Endoribonuclease YbeY from Beijerinckia indica subsp. indica (strain ATCC 9039 / DSM 1715 / NCIMB 8712).